Reading from the N-terminus, the 172-residue chain is Protein-export protein SecB (172 aa).

Belongs to the SecB family. As to quaternary structure, homotetramer, a dimer of dimers. One homotetramer interacts with 1 SecA dimer.

It localises to the cytoplasm. In terms of biological role, one of the proteins required for the normal export of preproteins out of the cell cytoplasm. It is a molecular chaperone that binds to a subset of precursor proteins, maintaining them in a translocation-competent state. It also specifically binds to its receptor SecA. This chain is Protein-export protein SecB, found in Dinoroseobacter shibae (strain DSM 16493 / NCIMB 14021 / DFL 12).